The following is a 474-amino-acid chain: Sialyltransferase-like protein 1 (474 aa).

Residues 1–14 lie on the Cytoplasmic side of the membrane; it reads MRSHQAGRKLPLLQ. The chain crosses the membrane as a helical; Signal-anchor for type II membrane protein span at residues 15-35; the sequence is LLGCVAVFSVFVFTIQSSFFA. Topologically, residues 36–474 are lumenal; sequence DNNRKLDLQP…CVRHPLKLDT (439 aa). N-linked (GlcNAc...) asparagine glycosylation is found at asparagine 88, asparagine 120, asparagine 155, and asparagine 243. The interval 376 to 421 is disordered; it reads RLQRSQQPTSSKRDGSGQFGNCKVWGDADPTKGPVSGSPDMSETRK.

This sequence belongs to the glycosyltransferase 29 family. Highly expressed in inflorescences and siliques and at lower levels in roots, leaves and stems.

It localises to the golgi apparatus membrane. Required for normal pollen grain germination and pollen tube growth. May not be required for pollen development and female gametophytic function. The protein is Sialyltransferase-like protein 1 of Arabidopsis thaliana (Mouse-ear cress).